The primary structure comprises 243 residues: MEIDQNLFQFPISTRDAVHEKNCTLRVKSTKKRRSSTKDEETRGMHPHIKSSFRNGMNHARVIREEDMEVVFEPCFINLSKPVYVVNGIGGINEIHKLPILFSSFVLCFFGNVSGDYGYVDNVPLHISVISHFYPCLQSYNTDVIGITTDTVENICQWKAHLPRALQFSLPVISDSNNEICREMGMLHPLGGAKLALDAIVIIDSIGRRRDILPIRTTTCVSTLITAVQETVRFLAIENGRLL.

Positions 28–50 (KSTKKRRSSTKDEETRGMHPHIK) are disordered.

Homodimer. Interacts with but2 and uba3.

It is found in the nucleus. Acts as a negative regulator of the NEDD8 pathway. Has a role in meiosis. In Schizosaccharomyces pombe (strain 972 / ATCC 24843) (Fission yeast), this protein is Uba3-binding protein but1 (but1).